Consider the following 150-residue polypeptide: D-aminoacyl-tRNA deacylase (150 aa).

Positions glycine 136–proline 137 match the Gly-cisPro motif, important for rejection of L-amino acids motif.

Belongs to the DTD family. As to quaternary structure, homodimer.

The protein resides in the cytoplasm. It carries out the reaction glycyl-tRNA(Ala) + H2O = tRNA(Ala) + glycine + H(+). It catalyses the reaction a D-aminoacyl-tRNA + H2O = a tRNA + a D-alpha-amino acid + H(+). In terms of biological role, an aminoacyl-tRNA editing enzyme that deacylates mischarged D-aminoacyl-tRNAs. Also deacylates mischarged glycyl-tRNA(Ala), protecting cells against glycine mischarging by AlaRS. Acts via tRNA-based rather than protein-based catalysis; rejects L-amino acids rather than detecting D-amino acids in the active site. By recycling D-aminoacyl-tRNA to D-amino acids and free tRNA molecules, this enzyme counteracts the toxicity associated with the formation of D-aminoacyl-tRNA entities in vivo and helps enforce protein L-homochirality. This is D-aminoacyl-tRNA deacylase from Staphylococcus aureus (strain Mu50 / ATCC 700699).